The primary structure comprises 85 residues: Thioredoxin (85 aa).

The 85-residue stretch at 1 to 85 folds into the Glutaredoxin domain; sequence MSKVKIELFT…ALVEAIKKRL (85 aa). Cys-14 and Cys-17 are oxidised to a cystine.

The protein belongs to the glutaredoxin family.

It is found in the cytoplasm. In terms of biological role, acts to maintain redox homeostasis; functions as a protein disulfide reductase. The sequence is that of Thioredoxin (trx) from Methanocaldococcus jannaschii (strain ATCC 43067 / DSM 2661 / JAL-1 / JCM 10045 / NBRC 100440) (Methanococcus jannaschii).